The chain runs to 207 residues: 2,3-bisphosphoglycerate-dependent phosphoglycerate mutase (207 aa).

Residues 10 to 17, 23 to 24, R62, 89 to 92, K100, 116 to 117, and 160 to 161 contribute to the substrate site; these read RHGQSEWN, TG, ERDY, RR, and GN. H11 functions as the Tele-phosphohistidine intermediate in the catalytic mechanism. Catalysis depends on E89, which acts as the Proton donor/acceptor.

Belongs to the phosphoglycerate mutase family. BPG-dependent PGAM subfamily. In terms of assembly, homodimer.

It catalyses the reaction (2R)-2-phosphoglycerate = (2R)-3-phosphoglycerate. It participates in carbohydrate degradation; glycolysis; pyruvate from D-glyceraldehyde 3-phosphate: step 3/5. Its function is as follows. Catalyzes the interconversion of 2-phosphoglycerate and 3-phosphoglycerate. The sequence is that of 2,3-bisphosphoglycerate-dependent phosphoglycerate mutase from Rhodopseudomonas palustris (strain BisB18).